Consider the following 197-residue polypeptide: Carbohydrate-binding X8 domain-containing protein (197 aa).

A signal peptide spans 1 to 19 (MAVLLPLFLLSFMFTYSNA). The segment covering 101 to 113 (SCLSSSSSNGTPT) has biased composition (low complexity). The segment at 101–176 (SCLSSSSSNG…TSGDPNGGEE (76 aa)) is disordered. Residues 116-125 (YPSTGNSTTA) show a composition bias toward polar residues. Residues 126-145 (SPGTTNPSTGNSTNSTLPTN) are compositionally biased toward low complexity. Over residues 146-155 (DKPTSSTITF) the composition is skewed to polar residues. Over residues 156 to 170 (PDSTTMGPSSSTSGD) the composition is skewed to low complexity. The GPI-anchor amidated asparagine moiety is linked to residue asparagine 172. A propeptide spans 173-197 (GGEELSVRTTTIILLTTIAAVALRV) (removed in mature form).

As to expression, expressed in the sieve elements.

The protein resides in the cell membrane. In Arabidopsis thaliana (Mouse-ear cress), this protein is Carbohydrate-binding X8 domain-containing protein.